The sequence spans 183 residues: Large ribosomal subunit protein uL6 (183 aa).

This sequence belongs to the universal ribosomal protein uL6 family. Part of the 50S ribosomal subunit.

In terms of biological role, this protein binds to the 23S rRNA, and is important in its secondary structure. It is located near the subunit interface in the base of the L7/L12 stalk, and near the tRNA binding site of the peptidyltransferase center. The protein is Large ribosomal subunit protein uL6 of Methanococcus aeolicus (strain ATCC BAA-1280 / DSM 17508 / OCM 812 / Nankai-3).